The sequence spans 378 residues: GDP-mannose-dependent alpha-mannosyltransferase (378 aa).

This sequence belongs to the glycosyltransferase group 1 family. Glycosyltransferase 4 subfamily.

Its pathway is phospholipid metabolism; phosphatidylinositol metabolism. Functionally, catalyzes the addition of a mannose residue from GDP-D-mannose to GlcAGroAc2 to generate 1,2-di-O-C16/C18:1-(alpha-D-mannopyranosyl)-(1-4)-(alpha-D-glucopyranosyluronic acid)-(1-3)-glycerol(ManGlcAGroAc2). The polypeptide is GDP-mannose-dependent alpha-mannosyltransferase (mgtA) (Mycobacterium tuberculosis (strain CDC 1551 / Oshkosh)).